We begin with the raw amino-acid sequence, 471 residues long: 3-isopropylmalate dehydratase large subunit (471 aa).

The [4Fe-4S] cluster site is built by Cys-346, Cys-406, and Cys-409.

It belongs to the aconitase/IPM isomerase family. LeuC type 1 subfamily. Heterodimer of LeuC and LeuD. Requires [4Fe-4S] cluster as cofactor.

It catalyses the reaction (2R,3S)-3-isopropylmalate = (2S)-2-isopropylmalate. It participates in amino-acid biosynthesis; L-leucine biosynthesis; L-leucine from 3-methyl-2-oxobutanoate: step 2/4. Its function is as follows. Catalyzes the isomerization between 2-isopropylmalate and 3-isopropylmalate, via the formation of 2-isopropylmaleate. The protein is 3-isopropylmalate dehydratase large subunit of Bacillus pumilus (strain SAFR-032).